We begin with the raw amino-acid sequence, 469 residues long: Putative dipeptidase SAB1611c (469 aa).

His-84 lines the Zn(2+) pocket. The active site involves Asp-86. Zn(2+) is bound at residue Asp-115. The Proton acceptor role is filled by Glu-149. Residues Glu-150, Asp-173, and His-440 each coordinate Zn(2+).

The protein belongs to the peptidase M20A family. It depends on Zn(2+) as a cofactor.

This Staphylococcus aureus (strain bovine RF122 / ET3-1) protein is Putative dipeptidase SAB1611c.